A 380-amino-acid polypeptide reads, in one-letter code: Cytochrome b (380 aa).

4 helical membrane passes run 33–53, 77–98, 113–133, and 178–198; these read FGSL…FLAM, WLIR…YLHV, WNIG…GYVL, and FFAF…LHLL. Heme b contacts are provided by histidine 83 and histidine 97. Heme b is bound by residues histidine 182 and histidine 196. Residue histidine 201 coordinates a ubiquinone. A run of 4 helical transmembrane segments spans residues 226-246, 288-308, 320-340, and 347-367; these read YKDL…TLFS, LGGV…PLLH, LTQI…WIGG, and FITV…ILIP.

This sequence belongs to the cytochrome b family. As to quaternary structure, the cytochrome bc1 complex contains 3 respiratory subunits (MT-CYB, CYC1 and UQCRFS1), 2 core proteins (UQCRC1 and UQCRC2) and probably 6 low-molecular weight proteins. Heme b is required as a cofactor.

The protein resides in the mitochondrion inner membrane. In terms of biological role, component of the ubiquinol-cytochrome c reductase complex (complex III or cytochrome b-c1 complex) that is part of the mitochondrial respiratory chain. The b-c1 complex mediates electron transfer from ubiquinol to cytochrome c. Contributes to the generation of a proton gradient across the mitochondrial membrane that is then used for ATP synthesis. The sequence is that of Cytochrome b (mt-cyb) from Allocyttus niger (Black oreo dory).